The following is a 414-amino-acid chain: Na(+)-translocating NADH-quinone reductase subunit B (414 aa).

Transmembrane regions (helical) follow at residues 56–76 (IMIM…YNAG), 129–149 (FLPI…LFCM), and 164–184 (ILFA…LGIT). Thr-236 is modified (FMN phosphoryl threonine). 5 helical membrane passes run 268–288 (IPGS…AMIV), 297–317 (IIAG…VIGS), 325–345 (MPWH…FMAT), 358–378 (WWYG…NPAY), and 381–401 (GMML…HVVI).

Belongs to the NqrB/RnfD family. As to quaternary structure, composed of six subunits; NqrA, NqrB, NqrC, NqrD, NqrE and NqrF. The cofactor is FMN.

Its subcellular location is the cell inner membrane. It carries out the reaction a ubiquinone + n Na(+)(in) + NADH + H(+) = a ubiquinol + n Na(+)(out) + NAD(+). Its activity is regulated as follows. This reaction is tightly coupled to the Na(+) pumping activity and specifically requires Na(+) for activity. Inhibited by korormicin and 2-N-heptyl-4-hydroxyquinoline N-oxide (HQNO). Functionally, NQR complex catalyzes the reduction of ubiquinone-1 to ubiquinol by two successive reactions, coupled with the transport of Na(+) ions from the cytoplasm to the periplasm. NqrA to NqrE are probably involved in the second step, the conversion of ubisemiquinone to ubiquinol. The sequence is that of Na(+)-translocating NADH-quinone reductase subunit B from Vibrio alginolyticus.